A 554-amino-acid chain; its full sequence is (E)-beta-caryophyllene synthase (554 aa).

Mn(2+) is bound by residues D313 and D317. The short motif at 313 to 317 is the DDXXD motif element; the sequence is DDTYD. Homodimerization regions lie at residues 319–325 and 391–427; these read YGTLDEL and EAQW…LAVI. Positions 457 and 465 each coordinate Mn(2+).

This sequence belongs to the terpene synthase family. Homodimer. The cofactor is Mn(2+). Mg(2+) is required as a cofactor. As to expression, expressed in peltate glandular trichomes. Present at low levels in flowers, leaves and stems.

The enzyme catalyses (2E,6E)-farnesyl diphosphate = (-)-(E)-beta-caryophyllene + diphosphate. It carries out the reaction (2E,6E)-farnesyl diphosphate = alpha-humulene + diphosphate. It participates in secondary metabolite biosynthesis; terpenoid biosynthesis. Functionally, involved in the biosynthesis of phenolic sesquiterpenes natural products. Sesquiterpene synthase converting (2E,6E)-farnesyl diphosphate (FPP) to (E)-beta-caryophyllene and alpha-humulene. In Origanum vulgare (Wild marjoram), this protein is (E)-beta-caryophyllene synthase.